The sequence spans 585 residues: Arginine--tRNA ligase (585 aa).

Positions A131–H141 match the 'HIGH' region motif.

The protein belongs to the class-I aminoacyl-tRNA synthetase family. As to quaternary structure, monomer.

It localises to the cytoplasm. The catalysed reaction is tRNA(Arg) + L-arginine + ATP = L-arginyl-tRNA(Arg) + AMP + diphosphate. The sequence is that of Arginine--tRNA ligase from Rhizobium leguminosarum bv. trifolii (strain WSM2304).